The primary structure comprises 183 residues: MEPEEGTPLWRLQKLPAELGPQLLHKIIDGICGRAYPVYQDYHTVWESEEWMHVLEDIAKFFKAIVGKNLPDEEIFQQLNQLNSLHQETIMKCVKSRKDEIKQALSREIVAISSAQLQDFDWQVKLALSSDKIAALRMPLLSLHLDVKENGEVKPYSIEMSREELQNLIQSLEAANKVVLQLK.

The COMM domain maps to 116 to 183 (QLQDFDWQVK…AANKVVLQLK (68 aa)).

This sequence belongs to the COMM domain-containing protein 8 family. Component of the commander complex consisting of the CCC subcomplex and the retriever subcomplex. Component of the CCC (COMMD/CCDC22/CCDC93) subcomplex consisting of COMMD1, COMMD2, COMMD3, COMMD4, COMMD5, COMMD6, COMMD7, COMMD8, COMMD9, COMMD10, CCDC22 and CCDC93; within the complex forms a heterodimer with COMMD4. Interacts with RELA, RELB, NFKB1/p105. Interacts with CCDC22, CCDC93, SCNN1B, CUL1, CUL2, CUL3, CUL4A, CUL4B, CUL5. In terms of tissue distribution, widely expressed with highest expression in thyroid.

Its subcellular location is the cytoplasm. It localises to the nucleus. Functionally, scaffold protein in the commander complex that is essential for endosomal recycling of transmembrane cargos; the commander complex is composed of the CCC subcomplex and the retriever subcomplex. May modulate activity of cullin-RING E3 ubiquitin ligase (CRL) complexes. May down-regulate activation of NF-kappa-B. The chain is COMM domain-containing protein 8 (COMMD8) from Homo sapiens (Human).